The following is a 569-amino-acid chain: Endonuclease/exonuclease/phosphatase family domain-containing protein 1 (569 aa).

Glycine 2 carries the N-myristoyl glycine lipid modification. 2 positions are modified to phosphoserine: serine 16 and serine 25. The region spanning 38 to 67 is the HhH domain; sequence ERLNINTATEEELMTLPGVTRAVARSIVEY. Serine 106, serine 110, serine 160, and serine 173 each carry phosphoserine. The disordered stretch occupies residues 200 to 224; it reads SRPPSTHTNGGLTFTAKPHPSPTSL. Residues 202-211 show a composition bias toward polar residues; it reads PPSTHTNGGL. Threonine 265 carries the phosphothreonine modification. A disordered region spans residues 549–569; it reads VPRNGNGVTLEPSEANIKHER.

The polypeptide is Endonuclease/exonuclease/phosphatase family domain-containing protein 1 (Eepd1) (Mus musculus (Mouse)).